The primary structure comprises 128 residues: MFQAAGAAQATPSHEAKGSSGSSTVQRSKSFSLRAQVKETCAACQKTVYPMERLVADKLIFHNSCFCCKHCHTKLSLGSYAAMHGEFYCRPHFQQLFKSKGNYDEGFGRKQHKELWAHKEVDSGTKTA.

Met1 is modified (N-acetylmethionine). Residues 1-25 (MFQAAGAAQATPSHEAKGSSGSSTV) are disordered. Residues 39–99 (ETCAACQKTV…RPHFQQLFKS (61 aa)) enclose the LIM zinc-binding domain. Residues Cys41, Cys44, His62, Cys65, Cys68, Cys71, Cys89, and His92 each contribute to the Zn(2+) site.

Interacts with ILK.

It localises to the cytoplasm. The protein localises to the nucleus. Its function is as follows. Acts as an activator of the protein-kinase ILK, thereby regulating cell motility. This chain is LIM domain-containing protein 2, found in Mus musculus (Mouse).